We begin with the raw amino-acid sequence, 160 residues long: S-ribosylhomocysteine lyase (160 aa).

Fe cation-binding residues include H57, H61, and C127.

This sequence belongs to the LuxS family. Homodimer. Fe cation is required as a cofactor.

The catalysed reaction is S-(5-deoxy-D-ribos-5-yl)-L-homocysteine = (S)-4,5-dihydroxypentane-2,3-dione + L-homocysteine. Its function is as follows. Involved in the synthesis of autoinducer 2 (AI-2) which is secreted by bacteria and is used to communicate both the cell density and the metabolic potential of the environment. The regulation of gene expression in response to changes in cell density is called quorum sensing. Catalyzes the transformation of S-ribosylhomocysteine (RHC) to homocysteine (HC) and 4,5-dihydroxy-2,3-pentadione (DPD). The chain is S-ribosylhomocysteine lyase from Streptococcus gordonii (strain Challis / ATCC 35105 / BCRC 15272 / CH1 / DL1 / V288).